Here is a 377-residue protein sequence, read N- to C-terminus: Apelin receptor (377 aa).

Residues M1–L28 lie on the Extracellular side of the membrane. N13 carries an N-linked (GlcNAc...) asparagine glycan. 2 disulfide bridges follow: C17/C279 and C100/C179. Residues I29–F52 form a helical membrane-spanning segment. The Cytoplasmic segment spans residues W53–A62. Residues D63–A84 traverse the membrane as a helical segment. Residues T85 to T97 are Extracellular-facing. Residues F98–F123 form a helical membrane-spanning segment. Residues D124–G144 lie on the Cytoplasmic side of the membrane. A helical membrane pass occupies residues A145–V162. Residues M163–E196 are Extracellular-facing. N173 carries N-linked (GlcNAc...) asparagine glycosylation. A helical transmembrane segment spans residues V197–F221. Residues I222–L244 lie on the Cytoplasmic side of the membrane. A helical transmembrane segment spans residues L245–L268. At Y269 to N287 the chain is on the extracellular side. Residues V288 to F310 traverse the membrane as a helical segment. The Cytoplasmic portion of the chain corresponds to D311 to D377. The segment covering S335–S349 has biased composition (low complexity). The disordered stretch occupies residues S335–D377.

The protein belongs to the G-protein coupled receptor 1 family. Homodimer; dimerization inhibits APLNR-mediated G protein and beta-arrestin signaling pathways compared to monomeric APLNR. Widely expressed. Highest expression in the lung, lower in the heart, placenta, ovary, skeletal muscle, mammary gland, kidney and several structures in the brain as the hypothalamus (supraoptic and periventricular nuclei), pituitary, olfactory bulb and pineal gland.

The protein resides in the cell membrane. In terms of biological role, g protein-coupled receptor for peptide hormones apelin (APLN) and apelin receptor early endogenous ligand (APELA/ELA), that plays a role in the regulation of normal cardiovascular function and fluid homeostasis. When acting as apelin receptor, activates both G(i) protein pathway that inhibits adenylate cyclase activity, and the beta-arrestin pathway that promotes internalization of the receptor. APLNR/APJ also functions as mechanoreceptor that is activated by pathological stimuli in a G-protein-independent fashion to induce beta-arrestin signaling, hence eliciting cardiac hypertrophy. However, the presence of apelin ligand blunts cardiac hypertrophic induction from APLNR/APJ on response to pathological stimuli. Plays a key role in early development such as gastrulation, blood vessels formation and heart morphogenesis by acting as a APELA receptor. May promote angioblast migration toward the embryonic midline, i.e. the position of the future vessel formation, during vasculogenesis. Promotes sinus venosus (SV)-derived endothelial cells migration into the developing heart to promote coronary blood vessel development. Also plays a role in various processes in adults such as regulation of blood vessel formation, blood pressure, heart contractility and heart failure. This chain is Apelin receptor, found in Rattus norvegicus (Rat).